Consider the following 821-residue polypeptide: High affinity potassium transporter (821 aa).

Polar residues predominate over residues 1 to 10 (MSDSQSNKQN). A disordered region spans residues 1–47 (MSDSQSNKQNQGEDDNNVSSSIESNENYPFRLNDEESEPQSSTTESM). Residues 1–57 (MSDSQSNKQNQGEDDNNVSSSIESNENYPFRLNDEESEPQSSTTESMLKAKKQSWRQ) are Cytoplasmic-facing. Over residues 17–27 (NVSSSIESNEN) the composition is skewed to low complexity. The helical transmembrane segment at 58–78 (VLMLGFSSLGAIYGDIGTSPL) threads the bilayer. The Extracellular portion of the chain corresponds to 79 to 101 (YVLNSIKYPNSSPTEEDIYGAIS). Residues 102–122 (IIFYLFTFIVIFKYILIVLFL) traverse the membrane as a helical segment. At 123 to 190 (GTNDGEGGQV…KASGFKTNPK (68 aa)) the chain is on the cytoplasmic side. Residues 191-211 (LIKFISKFILFGCFFGCSLVM) traverse the membrane as a helical segment. Topologically, residues 212 to 238 (SDGLLTPTTSVLSAIAGIQIANPSFND) are extracellular. Residues 239 to 259 (VLAVSEVVLIVLFLIQQFGSN) form a helical membrane-spanning segment. Residue Lys260 is a topological domain, cytoplasmic. Residues 261 to 281 (ISFTFAPIIFLWLIGLIISGI) form a helical membrane-spanning segment. Topologically, residues 282–306 (YNIVKFHPAVFKSLSPYYAIQLLKH) are extracellular. Residues 307–327 (SGIDVFSGAMLSITGTEAMFA) form a helical membrane-spanning segment. Over 328-340 (DVGHFGRLPIQLT) the chain is Cytoplasmic. A helical transmembrane segment spans residues 341-361 (LTLFVYPALIICYLGQGAYII). The Extracellular segment spans residues 362 to 386 (KHPEALSNPFFYSIPGGLNSWIYWV). The chain crosses the membrane as a helical span at residues 387–407 (MFVLATLSTIIASQALILGVF). Topologically, residues 408–434 (SITSQLINLDCFPNFKIIHVSKKYAGK) are cytoplasmic. The chain crosses the membrane as a helical span at residues 435-455 (VYIPAINWLLMIGVCATTAGF). Topologically, residues 456–463 (KNSNNVTA) are extracellular. An N-linked (GlcNAc...) asparagine glycan is attached at Asn460. Residues 464 to 484 (AYGLGITLDFLVTSSLIMVCM) traverse the membrane as a helical segment. Over 485 to 491 (TYVYNWN) the chain is Cytoplasmic. The helical transmembrane segment at 492 to 512 (ILIPITYALIFLPLEVIMVIS) threads the bilayer. Residues 513 to 516 (NLKK) are Extracellular-facing. A helical membrane pass occupies residues 517–537 (ITHGAWFPLMMSGIFMMFLSF). Residues 538 to 821 (WRWARSRKVN…KMFLGGVVRI (284 aa)) are Cytoplasmic-facing.

This sequence belongs to the HAK/KUP transporter (TC 2.A.72) family.

The protein localises to the membrane. Its function is as follows. Major high-affinity potassium uptake protein. The sequence is that of High affinity potassium transporter (HAK1) from Schwanniomyces occidentalis (Yeast).